An 890-amino-acid chain; its full sequence is Alanine--tRNA ligase (890 aa).

Residues histidine 565, histidine 569, cysteine 677, and histidine 681 each contribute to the Zn(2+) site.

It belongs to the class-II aminoacyl-tRNA synthetase family. Requires Zn(2+) as cofactor.

Its subcellular location is the cytoplasm. The enzyme catalyses tRNA(Ala) + L-alanine + ATP = L-alanyl-tRNA(Ala) + AMP + diphosphate. In terms of biological role, catalyzes the attachment of alanine to tRNA(Ala) in a two-step reaction: alanine is first activated by ATP to form Ala-AMP and then transferred to the acceptor end of tRNA(Ala). Also edits incorrectly charged Ser-tRNA(Ala) and Gly-tRNA(Ala) via its editing domain. The sequence is that of Alanine--tRNA ligase from Zymomonas mobilis subsp. mobilis (strain ATCC 31821 / ZM4 / CP4).